The primary structure comprises 744 residues: C-type polyheme cytochrome OmcB (744 aa).

The N-terminal stretch at 1 to 23 (MSRKVTKYSAVLAVSLFAAALAG) is a signal peptide. Residue C24 is the site of N-palmitoyl cysteine attachment. C24 carries S-diacylglycerol cysteine lipidation. Heme c contacts are provided by C48, C51, H52, C81, C84, H85, C107, C110, H111, C141, C144, H145, C185, C188, H189, C225, C228, H229, C303, C306, H307, C382, C385, H386, C430, C433, H434, C480, C483, H484, C555, C558, H559, C587, C590, and H591.

Binds 12 heme c groups per subunit.

It is found in the cell outer membrane. Involved in anaerobic respiration with Fe(3+) as terminal electron acceptor. Acts as an electron-transport mediator in the dissimilatory reduction of Fe(3+). The chain is C-type polyheme cytochrome OmcB (omcB) from Geobacter sulfurreducens (strain DL-1 / KN400).